Here is a 363-residue protein sequence, read N- to C-terminus: NAD(P)H-quinone oxidoreductase subunit 1, chloroplastic (363 aa).

A run of 8 helical transmembrane segments spans residues 26–46 (FVWICVPIVVLILGITLGVLV), 96–116 (WLFALGPAIVVIPVLLSFLVI), 127–147 (ISIGMFFWIAVSSVAPVGLLV), 175–195 (LALCVLSVVLMSNSLSTIEIV), 203–223 (ILGWNIWRQPVGFIAFVISAL), 253–273 (FGLFYVASYLNLFASSLFVTI), 303–323 (GLIAFAITLSKAYLFLFASIL), and 343–363 (FLLPVALGNLLLTASFELALL).

The protein belongs to the complex I subunit 1 family. NDH is composed of at least 16 different subunits, 5 of which are encoded in the nucleus.

The protein resides in the plastid. The protein localises to the chloroplast thylakoid membrane. It catalyses the reaction a plastoquinone + NADH + (n+1) H(+)(in) = a plastoquinol + NAD(+) + n H(+)(out). It carries out the reaction a plastoquinone + NADPH + (n+1) H(+)(in) = a plastoquinol + NADP(+) + n H(+)(out). Functionally, NDH shuttles electrons from NAD(P)H:plastoquinone, via FMN and iron-sulfur (Fe-S) centers, to quinones in the photosynthetic chain and possibly in a chloroplast respiratory chain. The immediate electron acceptor for the enzyme in this species is believed to be plastoquinone. Couples the redox reaction to proton translocation, and thus conserves the redox energy in a proton gradient. This chain is NAD(P)H-quinone oxidoreductase subunit 1, chloroplastic, found in Zygnema circumcarinatum (Green alga).